The chain runs to 487 residues: Aspartyl/glutamyl-tRNA(Asn/Gln) amidotransferase subunit B (487 aa).

It belongs to the GatB/GatE family. GatB subfamily. As to quaternary structure, heterotrimer of A, B and C subunits.

The enzyme catalyses L-glutamyl-tRNA(Gln) + L-glutamine + ATP + H2O = L-glutaminyl-tRNA(Gln) + L-glutamate + ADP + phosphate + H(+). It catalyses the reaction L-aspartyl-tRNA(Asn) + L-glutamine + ATP + H2O = L-asparaginyl-tRNA(Asn) + L-glutamate + ADP + phosphate + 2 H(+). Allows the formation of correctly charged Asn-tRNA(Asn) or Gln-tRNA(Gln) through the transamidation of misacylated Asp-tRNA(Asn) or Glu-tRNA(Gln) in organisms which lack either or both of asparaginyl-tRNA or glutaminyl-tRNA synthetases. The reaction takes place in the presence of glutamine and ATP through an activated phospho-Asp-tRNA(Asn) or phospho-Glu-tRNA(Gln). This is Aspartyl/glutamyl-tRNA(Asn/Gln) amidotransferase subunit B from Roseiflexus sp. (strain RS-1).